Here is a 918-residue protein sequence, read N- to C-terminus: Signal transduction histidine-protein kinase BarA (918 aa).

Residues 1–9 (MTNYSLRAR) are Cytoplasmic-facing. Residues 10-31 (MMILILAPTVLIGLLLSIFFVV) traverse the membrane as a helical segment. Residues 32–176 (HRYNDLQRQL…KSVRLQQYKE (145 aa)) lie on the Periplasmic side of the membrane. A helical membrane pass occupies residues 177-196 (IFISSVMMLFCIGIALIFGW). The Cytoplasmic portion of the chain corresponds to 197–918 (RLMRDVTGPI…VAREASKILG (722 aa)). The region spanning 200-252 (RDVTGPIRNMVNTVDRIRRGQLDSRVEGFMLGELDMLKNGINSMAMSLAAYHE) is the HAMP domain. Residues 299-520 (NMSHELRTPL…TFWFHINLDL (222 aa)) enclose the Histidine kinase domain. Histidine 302 bears the Phosphohistidine; by autocatalysis mark. Residues 669–785 (TVMAVDDNPA…RLHNLLLRYK (117 aa)) enclose the Response regulatory domain. Aspartate 718 bears the 4-aspartylphosphate mark. The region spanning 822–918 (KTDLARDMLQ…VAREASKILG (97 aa)) is the HPt domain. Histidine 861 carries the post-translational modification Phosphohistidine.

In terms of processing, activation requires a sequential transfer of a phosphate group from a His in the primary transmitter domain, to an Asp in the receiver domain and to a His in the secondary transmitter domain.

Its subcellular location is the cell inner membrane. The enzyme catalyses ATP + protein L-histidine = ADP + protein N-phospho-L-histidine.. In terms of biological role, member of the two-component regulatory system UvrY/BarA involved in the regulation of carbon metabolism via the CsrA/CsrB regulatory system. Phosphorylates UvrY, probably via a four-step phosphorelay. This is Signal transduction histidine-protein kinase BarA (barA) from Escherichia coli O157:H7.